Consider the following 215-residue polypeptide: Cytochrome b6 (215 aa).

A helical membrane pass occupies residues 32 to 52 (IFYCFGGLVLTCFLIQVATGF). Cys-35 contacts heme c. Residues His-86 and His-100 each contribute to the heme b site. Helical transmembrane passes span 90-110 (ASMM…TGGF), 116-136 (LTWV…VTGY), and 186-206 (AHTF…FLMI). Heme b contacts are provided by His-187 and His-202.

This sequence belongs to the cytochrome b family. PetB subfamily. The 4 large subunits of the cytochrome b6-f complex are cytochrome b6, subunit IV (17 kDa polypeptide, PetD), cytochrome f and the Rieske protein, while the 4 small subunits are PetG, PetL, PetM and PetN. The complex functions as a dimer. Heme b is required as a cofactor. It depends on heme c as a cofactor.

The protein resides in the plastid. It is found in the chloroplast thylakoid membrane. In terms of biological role, component of the cytochrome b6-f complex, which mediates electron transfer between photosystem II (PSII) and photosystem I (PSI), cyclic electron flow around PSI, and state transitions. The protein is Cytochrome b6 of Phaeodactylum tricornutum (strain CCAP 1055/1).